Here is a 314-residue protein sequence, read N- to C-terminus: Homoserine O-acetyltransferase (314 aa).

C142 acts as the Acyl-thioester intermediate in catalysis. K163 and S192 together coordinate substrate. H235 serves as the catalytic Proton acceptor. E237 is an active-site residue. R249 serves as a coordination point for substrate.

This sequence belongs to the MetA family.

It localises to the cytoplasm. The enzyme catalyses L-homoserine + acetyl-CoA = O-acetyl-L-homoserine + CoA. Its pathway is amino-acid biosynthesis; L-methionine biosynthesis via de novo pathway; O-acetyl-L-homoserine from L-homoserine: step 1/1. Functionally, transfers an acetyl group from acetyl-CoA to L-homoserine, forming acetyl-L-homoserine. This is Homoserine O-acetyltransferase from Streptococcus mutans serotype c (strain ATCC 700610 / UA159).